The primary structure comprises 572 residues: Phenylalanine--tRNA ligase beta subunit (572 aa).

Residues 285-363 enclose the B5 domain; it reads LSTTTKTVSH…RAFGFNELEP (79 aa). Mg(2+)-binding residues include aspartate 341, aspartate 347, aspartate 350, and aspartate 351.

It belongs to the phenylalanyl-tRNA synthetase beta subunit family. Type 2 subfamily. Tetramer of two alpha and two beta subunits. Mg(2+) is required as a cofactor.

The protein resides in the cytoplasm. It carries out the reaction tRNA(Phe) + L-phenylalanine + ATP = L-phenylalanyl-tRNA(Phe) + AMP + diphosphate + H(+). This is Phenylalanine--tRNA ligase beta subunit from Natronomonas pharaonis (strain ATCC 35678 / DSM 2160 / CIP 103997 / JCM 8858 / NBRC 14720 / NCIMB 2260 / Gabara) (Halobacterium pharaonis).